The chain runs to 283 residues: Putative sugar uptake protein BC_0219 (283 aa).

The next 10 helical transmembrane spans lie at 4-21 (LLALLPAIAWGNILLVSV), 26-48 (GAYSQTVGMTIGALFFATIMYVF), 52-71 (ALTMTILIVGFISGLFWALG), 84-106 (VSTTVTISTGMQLVATSIFGVIA), 110-132 (WTTTTTIILGTIAILLIVVGVVF), 151-173 (LLTLIVSTFGYLVYVIIIRWYNI), 178-195 (AILPQAVGMFVGAVVLTS), 208-230 (ALSGLLWGTGNLFLLLSLPRVGV), 234-253 (FPLSQTGIVISTFGAIVFLG), and 260-279 (QLIFIALGSVLIIGGAVLLG).

Belongs to the GRP transporter (TC 2.A.7.5) family.

It is found in the cell membrane. The sequence is that of Putative sugar uptake protein BC_0219 from Bacillus cereus (strain ATCC 14579 / DSM 31 / CCUG 7414 / JCM 2152 / NBRC 15305 / NCIMB 9373 / NCTC 2599 / NRRL B-3711).